We begin with the raw amino-acid sequence, 274 residues long: E3 ubiquitin-protein ligase complex SLX5-SLX8 subunit SLX8 (274 aa).

Disordered regions lie at residues 1 to 117 and 136 to 159; these read MARR…GNNI and ANTPSASPMLDAAPPTTKPGTNSK. The span at 13-28 shows a compositional bias: basic and acidic residues; that stretch reads ENLRIKRVRLESVRQN. Phosphoserine is present on serine 50. Threonine 66 bears the Phosphothreonine mark. Over residues 66-75 the composition is skewed to acidic residues; the sequence is TSEEDGDDDL. Serine 67 is subject to Phosphoserine. Residues 97 to 108 show a composition bias toward basic and acidic residues; the sequence is GNHDRETMHTEE. Residues 206–250 form an RING-type zinc finger; that stretch reads CPICFEPPETALMTLCGHVFCCPCLFQMVNSSRTCRQFGHCALCR.

Component of the heterodimeric SUMO-targeted ubiquitin ligase (STUbL) complex composed of SLX5 and SLX8.

The protein localises to the nucleus. Its subcellular location is the chromosome. It localises to the centromere. The protein resides in the kinetochore. It carries out the reaction S-ubiquitinyl-[E2 ubiquitin-conjugating enzyme]-L-cysteine + [acceptor protein]-L-lysine = [E2 ubiquitin-conjugating enzyme]-L-cysteine + N(6)-ubiquitinyl-[acceptor protein]-L-lysine.. The protein operates within protein modification; protein ubiquitination. In terms of biological role, component of the SUMO-targeted ubiquitin ligase (STUbL) complex SLX5/SLX8 that mediates ubiquitination and subsequent desumoylation of sumoylated proteins and proteins containing SUMO-like domains for their degradation. The STUbL complex SLX5/SLX8 stimulates ubiquitin conjugating enzymes, including UBC1, UBC4, UBC5 and UBC13-MMS2, and mediates the proteolytic down-regulation of sumoylated proteins. The STUbL complex SLX5/SLX8 is involved in ubiquitin-mediated degradation of histone variant CSE4, preventing mislocalization to euchromatin. The complex plays an essential role in maintenance of chromosome stability and links SUMO-dependent ubiquitination to a centromere-specific function during mitosis. The complex is involved in proteolysis of spindle positioning protein KAR9 and ensures correct spindle function by regulating levels of microtubule-associated proteins. During replication, the complex helps to prevent DNA lesions via recombination and has a role in localizing the DNA damage protein DCD2. The complex especially ubiquitinates the nuclease YEN1 and prevents persistent accumulation of a fraction of YEN1 associated with sites of activity in late G2/M and helps maintain the balance between pro- and anti-crossover pathways during homologous recombination. It is also involved in ubiquitin-mediated degradation of DNA repair proteins RAD52 and RAD57. Finally, the complex is recruited to distinct genomic hotspots of non-H2B protein ubiquitination (ub-hotspots) by the sumoylated transcription factor-like protein EUC1 where it ubiquitinates EUC1 and presumably other targets. This is E3 ubiquitin-protein ligase complex SLX5-SLX8 subunit SLX8 (SLX8) from Saccharomyces cerevisiae (strain ATCC 204508 / S288c) (Baker's yeast).